The chain runs to 172 residues: MERAAKKEAVEQLHEVFKTTGVAVVAHYSGLTVAQMQNLRKQMKQAGASVKVSKNRLAKIALEGTDVVGIGPLLKGPTVIATSNDPVAAPKVAIEFAKANEKFVILGGSMGSTVLNVDSVKALASLPSLDELRGKLVGLIQAPATKLAQLANAPAAKVARVIQAHASKGEAA.

The protein belongs to the universal ribosomal protein uL10 family. As to quaternary structure, part of the ribosomal stalk of the 50S ribosomal subunit. The N-terminus interacts with L11 and the large rRNA to form the base of the stalk. The C-terminus forms an elongated spine to which L12 dimers bind in a sequential fashion forming a multimeric L10(L12)X complex.

Functionally, forms part of the ribosomal stalk, playing a central role in the interaction of the ribosome with GTP-bound translation factors. The sequence is that of Large ribosomal subunit protein uL10 from Bradyrhizobium sp. (strain ORS 278).